Consider the following 170-residue polypeptide: Adenine phosphoribosyltransferase (170 aa).

It belongs to the purine/pyrimidine phosphoribosyltransferase family. In terms of assembly, homodimer.

Its subcellular location is the cytoplasm. It catalyses the reaction AMP + diphosphate = 5-phospho-alpha-D-ribose 1-diphosphate + adenine. The protein operates within purine metabolism; AMP biosynthesis via salvage pathway; AMP from adenine: step 1/1. Its function is as follows. Catalyzes a salvage reaction resulting in the formation of AMP, that is energically less costly than de novo synthesis. This chain is Adenine phosphoribosyltransferase, found in Bacillus pumilus (strain SAFR-032).